We begin with the raw amino-acid sequence, 358 residues long: Putative hydrogenase expression/formation protein MJ0993 (358 aa).

Residues C33, C61, and C64 each coordinate Fe cation.

The protein belongs to the HypD family.

In Methanocaldococcus jannaschii (strain ATCC 43067 / DSM 2661 / JAL-1 / JCM 10045 / NBRC 100440) (Methanococcus jannaschii), this protein is Putative hydrogenase expression/formation protein MJ0993.